A 727-amino-acid polypeptide reads, in one-letter code: Glycerol-3-phosphate dehydrogenase, mitochondrial (727 aa).

A mitochondrion-targeting transit peptide spans 1–42; it reads MAFQKAVKGTILVGGGALATVLGLSQFAHYRRKQMNLAYVKA. 71–99 contacts FAD; that stretch reads DILVIGGGATGSGCALDAVTRGLKTALVE. Tyr601 is modified (phosphotyrosine). 2 consecutive EF-hand domains span residues 623 to 658 and 659 to 694; these read SDIDRYKKRFHKFDADQKGFITIVDVQRVLESINVQ and MDENTLHEILNEVDLNKNGQVELNEFLQLMSAIQKG. The Ca(2+) site is built by Asp672, Asn674, Asn676, Gln678, and Glu683.

This sequence belongs to the FAD-dependent glycerol-3-phosphate dehydrogenase family. It depends on FAD as a cofactor.

Its subcellular location is the mitochondrion. The catalysed reaction is a quinone + sn-glycerol 3-phosphate = dihydroxyacetone phosphate + a quinol. It participates in polyol metabolism; glycerol degradation via glycerol kinase pathway; glycerone phosphate from sn-glycerol 3-phosphate (anaerobic route): step 1/1. Calcium-binding enhance the activity of the enzyme. In terms of biological role, calcium-responsive mitochondrial glycerol-3-phosphate dehydrogenase which seems to be a key component of the pancreatic beta-cell glucose-sensing device. This Homo sapiens (Human) protein is Glycerol-3-phosphate dehydrogenase, mitochondrial.